A 299-amino-acid polypeptide reads, in one-letter code: Oxygen-dependent coproporphyrinogen-III oxidase (299 aa).

S92 contributes to the substrate binding site. H96 and H106 together coordinate a divalent metal cation. H106 (proton donor) is an active-site residue. 108–110 is a substrate binding site; that stretch reads NVR. Positions 145 and 175 each coordinate a divalent metal cation. Residues 240–275 are important for dimerization; it reads YVEFNLVWDRGTLFGLQTGGRTESILMSMPPLVRWE. Residue 258–260 coordinates substrate; the sequence is GGR.

This sequence belongs to the aerobic coproporphyrinogen-III oxidase family. In terms of assembly, homodimer. A divalent metal cation is required as a cofactor.

Its subcellular location is the cytoplasm. It carries out the reaction coproporphyrinogen III + O2 + 2 H(+) = protoporphyrinogen IX + 2 CO2 + 2 H2O. It functions in the pathway porphyrin-containing compound metabolism; protoporphyrin-IX biosynthesis; protoporphyrinogen-IX from coproporphyrinogen-III (O2 route): step 1/1. Its function is as follows. Involved in the heme biosynthesis. Catalyzes the aerobic oxidative decarboxylation of propionate groups of rings A and B of coproporphyrinogen-III to yield the vinyl groups in protoporphyrinogen-IX. The polypeptide is Oxygen-dependent coproporphyrinogen-III oxidase (Salmonella paratyphi B (strain ATCC BAA-1250 / SPB7)).